Reading from the N-terminus, the 352-residue chain is Protein MGF 360-16R (352 aa).

Belongs to the asfivirus MGF 360 family.

Functionally, plays a role in virus cell tropism, and may be required for efficient virus replication in macrophages. The sequence is that of Protein MGF 360-16R from Ornithodoros (relapsing fever ticks).